Consider the following 312-residue polypeptide: Malate dehydrogenase (312 aa).

NAD(+) is bound by residues 7–13 (GAAGGIG) and Asp34. Arg81 and Arg87 together coordinate substrate. NAD(+) contacts are provided by residues Asn94 and 117-119 (ITN). Asn119 and Arg153 together coordinate substrate. His177 (proton acceptor) is an active-site residue. Met227 is a binding site for NAD(+).

It belongs to the LDH/MDH superfamily. MDH type 1 family. In terms of assembly, homodimer.

It carries out the reaction (S)-malate + NAD(+) = oxaloacetate + NADH + H(+). In terms of biological role, catalyzes the reversible oxidation of malate to oxaloacetate. In Shigella flexneri serotype 5b (strain 8401), this protein is Malate dehydrogenase.